A 741-amino-acid polypeptide reads, in one-letter code: Catalase-peroxidase (741 aa).

A signal peptide spans 1 to 23 (MLKKIVTALGMSGMLLASSNAIA). The tryptophyl-tyrosyl-methioninium (Trp-Tyr) (with M-249) cross-link spans 102 to 223 (WHDAGTYRIY…YAATQMGLIY (122 aa)). His103 serves as the catalytic Proton acceptor. The segment at residues 223-249 (YVNPEGPDGKPDIKGAASEIRQAFRAM) is a cross-link (tryptophyl-tyrosyl-methioninium (Tyr-Met) (with W-102)). Position 264 (His264) interacts with heme b.

It belongs to the peroxidase family. Peroxidase/catalase subfamily. Homodimer or homotetramer. The cofactor is heme b. In terms of processing, formation of the three residue Trp-Tyr-Met cross-link is important for the catalase, but not the peroxidase activity of the enzyme.

The enzyme catalyses H2O2 + AH2 = A + 2 H2O. The catalysed reaction is 2 H2O2 = O2 + 2 H2O. In terms of biological role, bifunctional enzyme with both catalase and broad-spectrum peroxidase activity. This chain is Catalase-peroxidase, found in Francisella tularensis subsp. tularensis (strain WY96-3418).